Consider the following 252-residue polypeptide: 3-dehydroquinate dehydratase (252 aa).

Residues Ser-21, 46–48 (EWR), and Arg-82 contribute to the 3-dehydroquinate site. His-143 serves as the catalytic Proton donor/acceptor. The Schiff-base intermediate with substrate role is filled by Lys-170. The 3-dehydroquinate site is built by Arg-213, Ser-232, and Gln-236.

This sequence belongs to the type-I 3-dehydroquinase family. In terms of assembly, homodimer.

It catalyses the reaction 3-dehydroquinate = 3-dehydroshikimate + H2O. It participates in metabolic intermediate biosynthesis; chorismate biosynthesis; chorismate from D-erythrose 4-phosphate and phosphoenolpyruvate: step 3/7. In terms of biological role, involved in the third step of the chorismate pathway, which leads to the biosynthesis of aromatic amino acids. Catalyzes the cis-dehydration of 3-dehydroquinate (DHQ) and introduces the first double bond of the aromatic ring to yield 3-dehydroshikimate. The protein is 3-dehydroquinate dehydratase of Shigella sonnei (strain Ss046).